Here is a 342-residue protein sequence, read N- to C-terminus: uncharacterized protein (342 aa).

7 residues coordinate Zn(2+): Cys41, His63, Cys94, Cys97, Cys100, Cys108, and Glu149.

It belongs to the zinc-containing alcohol dehydrogenase family. The cofactor is Zn(2+).

This is an uncharacterized protein from Haemophilus influenzae (strain ATCC 51907 / DSM 11121 / KW20 / Rd).